Reading from the N-terminus, the 234-residue chain is uncharacterized protein (234 aa).

LRR repeat units lie at residues 44–63 (LEFL…LPKL), 64–84 (KLRK…EKCP), 85–107 (NLTH…PLKQ), and 111–134 (LKSL…VFKL). Residues 161-234 (EGLDDEEEGE…GEEERGQKRK (74 aa)) form a disordered region. Positions 163–226 (LDDEEEGEHE…GEEDEEELGE (64 aa)) are enriched in acidic residues.

It belongs to the ANP32 family. As to expression, expressed in activated stem cells, such as mobilized CD34+ cells and cord blood CD34+ cells, but not in resting bone marrow CD34+ cells. Expressed in a variety of neoplastic cell lines, mainly in prostatic adenocarcinoma cell lines. Not expressed in normal prostatic tissue.

This is an uncharacterized protein from Homo sapiens (Human).